The chain runs to 111 residues: Secreted transmembrane peptide 5 (111 aa).

A signal peptide spans 1–46 (MRLSVFYIFITRLAMTKNATKNEMGSKSPNIVALVLPLLLILYTLS). The SCOOP motif motif lies at 66–79 (IVWTPHSNSCGGSP). Positions 72–74 (SNS) match the SxS motif essential for MIK2 binding motif. The tract at residues 89 to 111 (TTGRPCRRSRPPGTNIPVSDQSP) is disordered.

This sequence belongs to the serine rich endogenous peptide (SCOOP) phytocytokine family. Interacts with MIK2 (via extracellular leucine-rich repeat domain); this interaction triggers the formation of complex between MIK2 and the BAK1/SERK3 and SERK4 coreceptors, and subsequent BAK1 activation by phosphorylation. Mostly expressed in leaves, and, to a lower extent, in roots, stems, siliques, seeds and flowers.

It localises to the cell membrane. Its subcellular location is the secreted. It is found in the extracellular space. The protein localises to the apoplast. Functionally, brassicaceae-specific phytocytokine (plant endogenous peptide released into the apoplast) perceived by MIK2 in a BAK1/SERK3 and SERK4 coreceptors-dependent manner, that modulates various physiological and antimicrobial processes including growth prevention and reactive oxygen species (ROS) response regulation. The sequence is that of Secreted transmembrane peptide 5 from Arabidopsis thaliana (Mouse-ear cress).